Here is a 258-residue protein sequence, read N- to C-terminus: Spindlin-2 (258 aa).

A disordered region spans residues 1–47 (MKTPHKKATARQQTREIVDDHTLSASMRKKKISQKKQRGRPSSQTRR). Residues 13 to 22 (QTREIVDDHT) are compositionally biased toward basic and acidic residues. Basic residues predominate over residues 27-39 (MRKKKISQKKQRG). 3 tudor-like domain regions span residues 50-99 (VGCR…LELH), 129-178 (IGKA…YQLL), and 210-255 (IGKH…YDLV). 2 histone H3K4me3 and H3R8me2a binding regions span residues glutamate 138 and 246 to 248 (DFH).

It belongs to the SPIN/STSY family. As to quaternary structure, interacts with C11orf84/SPINDOC.

It localises to the nucleus. In terms of biological role, may be involved in the regulation of cell cycle progression. Exhibits H3K4me3-binding activity. The chain is Spindlin-2 (SPIN2) from Bos taurus (Bovine).